Consider the following 242-residue polypeptide: Myb-related protein MYBAS2 (242 aa).

HTH myb-type domains follow at residues 5-61 and 62-112; these read REEI…HPGL and KRGR…RKKA. The segment at residues 33-57 is a DNA-binding region (H-T-H motif); it reads WDFIAKVSGLNRTGKSCRLRWVNYL. The Bipartite nuclear localization signal 1 signature appears at 62-65; that stretch reads KRGR. Positions 85-108 form a DNA-binding region, H-T-H motif; the sequence is WSRIARRLPGRTDNEIKNYWRTHM. A Bipartite nuclear localization signal 2 motif is present at residues 109–117; the sequence is RKKAQERKS. A disordered region spans residues 110–133; the sequence is KKAQERKSNMSPSSSSSSLTYQSC. The span at 118 to 133 shows a compositional bias: low complexity; it reads NMSPSSSSSSLTYQSC.

The protein localises to the nucleus. Transcription factor. This chain is Myb-related protein MYBAS2 (MYBAS2), found in Oryza sativa subsp. japonica (Rice).